The following is a 93-amino-acid chain: DNA-directed RNA polymerase subunit omega (93 aa).

It belongs to the RNA polymerase subunit omega family. As to quaternary structure, the RNAP catalytic core consists of 2 alpha, 1 beta, 1 beta' and 1 omega subunit. When a sigma factor is associated with the core the holoenzyme is formed, which can initiate transcription.

The enzyme catalyses RNA(n) + a ribonucleoside 5'-triphosphate = RNA(n+1) + diphosphate. In terms of biological role, promotes RNA polymerase assembly. Latches the N- and C-terminal regions of the beta' subunit thereby facilitating its interaction with the beta and alpha subunits. The protein is DNA-directed RNA polymerase subunit omega of Shewanella piezotolerans (strain WP3 / JCM 13877).